We begin with the raw amino-acid sequence, 310 residues long: ADP-L-glycero-D-manno-heptose-6-epimerase (310 aa).

NADP(+)-binding positions include 10–11, 31–32, lysine 38, lysine 53, 75–79, and asparagine 92; these read LI, DN, and EGACS. Residue tyrosine 140 is the Proton acceptor of the active site. Residue lysine 144 participates in NADP(+) binding. Substrate is bound at residue asparagine 169. Residues valine 170 and lysine 178 each coordinate NADP(+). Residue lysine 178 is the Proton acceptor of the active site. Substrate is bound by residues serine 180, histidine 187, 201–204, arginine 209, and tyrosine 272; that span reads FAGS.

This sequence belongs to the NAD(P)-dependent epimerase/dehydratase family. HldD subfamily. Homopentamer. NADP(+) serves as cofactor.

The catalysed reaction is ADP-D-glycero-beta-D-manno-heptose = ADP-L-glycero-beta-D-manno-heptose. It participates in nucleotide-sugar biosynthesis; ADP-L-glycero-beta-D-manno-heptose biosynthesis; ADP-L-glycero-beta-D-manno-heptose from D-glycero-beta-D-manno-heptose 7-phosphate: step 4/4. In terms of biological role, catalyzes the interconversion between ADP-D-glycero-beta-D-manno-heptose and ADP-L-glycero-beta-D-manno-heptose via an epimerization at carbon 6 of the heptose. This is ADP-L-glycero-D-manno-heptose-6-epimerase from Erwinia tasmaniensis (strain DSM 17950 / CFBP 7177 / CIP 109463 / NCPPB 4357 / Et1/99).